Reading from the N-terminus, the 649-residue chain is Echinoderm microtubule-associated protein-like 2 (649 aa).

Positions 10–649 (KEVIFSMEEG…DTSVLQWRVA (640 aa)) are tandem atypical propeller in EMLs. WD repeat units follow at residues 56–93 (KLDWVYGYRGRDCRANLYLLPTGEVVYFVASVAVLYSV), 97–144 (RQRH…VWDS), 151–192 (HVLG…VWDW), 195–234 (ESKVVDSKCSNEAVLVATFHPTDPNLLITCGKSHIYFWSL), 241–280 (KRQGLFEKHEKPKYVLCVTFLEGGDVVTGDSGGNLYVWGK), 285–323 (ITQEVLGAHDGGVFALCALRDGTLVSGGGRDRRVVLWGS), 369–406 (FSLLVQGHVEELWGLATHPSRAQFVSCGQDKLVHLWSS), 410–447 (QPVWSRSIEDPARSAGFHPSGSVLAVGTVTGRWLLLDT), 452–489 (LVAIHTDGNEQISVVSFSPDGAYLAVGSHDNLVYVYTV), 495–535 (KVSR…YWDA), 564–602 (FGIWPEGADGTDINAVARSHDGNLLVSADDFGKVHLFSY), and 609–648 (ALSHKYGGHSSHVTNVAFLWDDSMVLTTGGKDTSVLQWRV).

The protein belongs to the WD repeat EMAP family. Interacts with GRID2 and may also interact with GRID1. Interacts with EML3. Binds unpolymerized tubulins via its WD repeat region. Widely expressed in both brain and peripheral tissues, including brainstem and enrichment in the postsynaptic density, PSD.

It localises to the cytoplasm. The protein resides in the cytoskeleton. It is found in the spindle. In terms of biological role, tubulin binding protein that inhibits microtubule nucleation and growth, resulting in shorter microtubules. The sequence is that of Echinoderm microtubule-associated protein-like 2 (Eml2) from Rattus norvegicus (Rat).